Here is a 107-residue protein sequence, read N- to C-terminus: Auxin-responsive protein SAUR50 (107 aa).

Belongs to the ARG7 family. As to quaternary structure, interacts with BZR1. As to expression, expressed in cotyledons, leaves, flowers and siliques.

It localises to the cell membrane. Provide a mechanistic link between auxin and plasma membrane H(+)-ATPases (PM H(+)-ATPases, e.g. AHA1 and AHA2), and triggers PM H(+)-ATPases activity by promoting phosphorylation of their C-terminal autoinhibitory domain as a result of PP2C-D subfamily of type 2C phosphatases inhibition, thus leading to the acidification of the apoplast and the facilitation of solutes and water uptake to drive cell expansion. Triggers plant growth probably by promoting cell elongation. Regulates branch angles and bending. Effector of hormonal and environmental signals in plant growth. The polypeptide is Auxin-responsive protein SAUR50 (Arabidopsis thaliana (Mouse-ear cress)).